The primary structure comprises 959 residues: MTDPKSYKDTVNLPKTNFSMRANAVKREPELQKFWADNQIYEKLSQENPEEVFVLHDGPPYANGSLHMGHALNKTLKDIINKYKLLRGYKVRYVPGWDCHGLPIELKVLQSMKSKEREGLTPLKLRHKARDFALKTQEEQAKGFKRFGVWGDWENPYLTLTPEYEAAQIGVFGEMALKGYIYRGLKPVHWSPSSQTALAEAELEYPEGHTSRSIFAAFPIIKASKDTEEILQPFLNKLGVAIWTTTPWTLPGNLAVALNPDLNYAVVEQNSDVCNYQYLIVAADLVERLSTTFETELTVKATLPGKALEHTIYRHPLYDRESEILIGGDYVTTESGTGLVHTAPGHGQEDYMVGQRYGLGILSPVDAKGNFTEEARQFAGLNVLKDANEVIINELKEKGSLLKEEAYQHKYPYDWRTKKPTIFRATEQWFASVKGFRDAALTAIKTVQWIPAQGENRITPMVSDRSDWCISRQRSWGLPIPVFYDEETNEPLLTEETIKHIQTIFAEKGSDAWWEMSIEALLPDQYKADAHKYRKGTDTMDVWFDSGSSWASVAKQRPELKYPADIYLEGSDQHRGWFQSSLLTSVAVNEIAPYKTVLTHGFVLDEKGHKMSKSLGNIVDPNVIINGGKNQKQEPPYGADVLRLWVSSVDYSSDVPIGKTILKQLSDIYRKIRNTARFLLGNLHDFDPKKDTVSYEELPELDRYMLHRITEVFTEVTDAFETYQFFRFFQTVQNFCVVDLSNFYLDIAKDRLYISHPESIRRRSCQTVLAIAIENLAKAIAPVLCHMAEDIWQFLPYETPYKSVFTAGWVKTSKQWENSELSASWAKIRGIRNEVNNALELARKEKAIGSSLDAKVLLYVPEQNLRQQLEKFNPADSLTGNHVDELRYFVLASQVELVDSLDSIKNADYHSESDLVSVGVIKAEGEKCDRCWNYSTKVGEFKDDPTICERCNAALVGDF.

The short motif at 60–70 is the 'HIGH' region element; it reads PYANGSLHMGH. Residue Glu569 participates in L-isoleucyl-5'-AMP binding. The 'KMSKS' region motif lies at 610 to 614; sequence KMSKS. Lys613 is an ATP binding site. Zn(2+)-binding residues include Cys928, Cys931, Cys948, and Cys951.

The protein belongs to the class-I aminoacyl-tRNA synthetase family. IleS type 1 subfamily. Monomer. The cofactor is Zn(2+).

The protein resides in the cytoplasm. The enzyme catalyses tRNA(Ile) + L-isoleucine + ATP = L-isoleucyl-tRNA(Ile) + AMP + diphosphate. In terms of biological role, catalyzes the attachment of isoleucine to tRNA(Ile). As IleRS can inadvertently accommodate and process structurally similar amino acids such as valine, to avoid such errors it has two additional distinct tRNA(Ile)-dependent editing activities. One activity is designated as 'pretransfer' editing and involves the hydrolysis of activated Val-AMP. The other activity is designated 'posttransfer' editing and involves deacylation of mischarged Val-tRNA(Ile). The sequence is that of Isoleucine--tRNA ligase from Crocosphaera subtropica (strain ATCC 51142 / BH68) (Cyanothece sp. (strain ATCC 51142)).